A 357-amino-acid chain; its full sequence is Holliday junction branch migration complex subunit RuvB (357 aa).

The segment at 1–20 (MDDHDDSPVSPSFLKSDGEI) is disordered. Residues 1-185 (MDDHDDSPVS…FGFTGHMDFY (185 aa)) form a large ATPase domain (RuvB-L) region. Residues leucine 24, arginine 25, glycine 66, lysine 69, threonine 70, serine 71, 132–134 (EDF), arginine 175, tyrosine 185, and arginine 222 each bind ATP. Threonine 70 is a binding site for Mg(2+). A small ATPAse domain (RuvB-S) region spans residues 186 to 256 (EPGELLRILE…VARAALEVYD (71 aa)). Residues 259 to 357 (TLGLDRLDRA…TSQPTLDLFD (99 aa)) are head domain (RuvB-H). Residues arginine 314 and arginine 319 each coordinate DNA.

It belongs to the RuvB family. Homohexamer. Forms an RuvA(8)-RuvB(12)-Holliday junction (HJ) complex. HJ DNA is sandwiched between 2 RuvA tetramers; dsDNA enters through RuvA and exits via RuvB. An RuvB hexamer assembles on each DNA strand where it exits the tetramer. Each RuvB hexamer is contacted by two RuvA subunits (via domain III) on 2 adjacent RuvB subunits; this complex drives branch migration. In the full resolvosome a probable DNA-RuvA(4)-RuvB(12)-RuvC(2) complex forms which resolves the HJ.

The protein localises to the cytoplasm. The enzyme catalyses ATP + H2O = ADP + phosphate + H(+). Its function is as follows. The RuvA-RuvB-RuvC complex processes Holliday junction (HJ) DNA during genetic recombination and DNA repair, while the RuvA-RuvB complex plays an important role in the rescue of blocked DNA replication forks via replication fork reversal (RFR). RuvA specifically binds to HJ cruciform DNA, conferring on it an open structure. The RuvB hexamer acts as an ATP-dependent pump, pulling dsDNA into and through the RuvAB complex. RuvB forms 2 homohexamers on either side of HJ DNA bound by 1 or 2 RuvA tetramers; 4 subunits per hexamer contact DNA at a time. Coordinated motions by a converter formed by DNA-disengaged RuvB subunits stimulates ATP hydrolysis and nucleotide exchange. Immobilization of the converter enables RuvB to convert the ATP-contained energy into a lever motion, pulling 2 nucleotides of DNA out of the RuvA tetramer per ATP hydrolyzed, thus driving DNA branch migration. The RuvB motors rotate together with the DNA substrate, which together with the progressing nucleotide cycle form the mechanistic basis for DNA recombination by continuous HJ branch migration. Branch migration allows RuvC to scan DNA until it finds its consensus sequence, where it cleaves and resolves cruciform DNA. In Nocardia farcinica (strain IFM 10152), this protein is Holliday junction branch migration complex subunit RuvB.